The primary structure comprises 742 residues: NAD(P)H-quinone oxidoreductase subunit 5, chloroplastic (742 aa).

16 helical membrane-spanning segments follow: residues 9 to 29 (WIIP…LLLF), 40 to 60 (WSFQ…NLSI), 89 to 109 (IDPL…MVLI), 125 to 145 (FAYM…SNLI), 147 to 167 (IYIF…FWFT), 185 to 205 (GDFG…SFEF), 219 to 239 (NEVN…GAIA), 258 to 278 (TPIS…FLVA), 283 to 303 (LFIV…ITVF), 327 to 347 (LGYM…FHLI), 354 to 374 (ALLF…VGYC), 396 to 416 (NSFL…CFWS), 425 to 445 (WLYS…TAFY), 550 to 570 (LFPI…GIPF), 606 to 626 (FFSV…YKPV), and 722 to 742 (YLFF…FFNV).

This sequence belongs to the complex I subunit 5 family. NDH is composed of at least 16 different subunits, 5 of which are encoded in the nucleus.

The protein resides in the plastid. It localises to the chloroplast thylakoid membrane. The enzyme catalyses a plastoquinone + NADH + (n+1) H(+)(in) = a plastoquinol + NAD(+) + n H(+)(out). It catalyses the reaction a plastoquinone + NADPH + (n+1) H(+)(in) = a plastoquinol + NADP(+) + n H(+)(out). Functionally, NDH shuttles electrons from NAD(P)H:plastoquinone, via FMN and iron-sulfur (Fe-S) centers, to quinones in the photosynthetic chain and possibly in a chloroplast respiratory chain. The immediate electron acceptor for the enzyme in this species is believed to be plastoquinone. Couples the redox reaction to proton translocation, and thus conserves the redox energy in a proton gradient. In Lactuca sativa (Garden lettuce), this protein is NAD(P)H-quinone oxidoreductase subunit 5, chloroplastic (ndhF).